A 532-amino-acid polypeptide reads, in one-letter code: Carboxypeptidase Y (532 aa).

The N-terminal stretch at 1-20 (MKAFTSLLCGLGLSTTLAKA) is a signal peptide. The propeptide at 21-111 (ISLQRPLGLD…AIENYQLRVN (91 aa)) is mediates translocation across the endoplasmic reticulum, renders the enzyme inactive during transit, and targets the molecule to the vacuole. A Vacuolar targeting signal motif is present at residues 24–27 (QRPL). 2 N-linked (GlcNAc...) (high mannose) asparagine glycosylation sites follow: asparagine 124 and asparagine 198. Intrachain disulfides connect cysteine 167-cysteine 409, cysteine 304-cysteine 318, cysteine 328-cysteine 351, cysteine 335-cysteine 344, and cysteine 373-cysteine 379. Residue serine 257 is part of the active site. The N-linked (GlcNAc...) (high mannose) asparagine glycan is linked to asparagine 279. Residue aspartate 449 is part of the active site. Cysteine 452 provides a ligand contact to substrate. N-linked (GlcNAc...) (high mannose) asparagine glycosylation is present at asparagine 479. Histidine 508 is a catalytic residue. Methionine 509 contributes to the substrate binding site.

It belongs to the peptidase S10 family. Post-translationally, enters the endoplasmic reticulum as an inactive zymogen and is modified by four N-linked core oligosaccharides, giving rise to a precursor known as P1 (67 kDa). As P1 transits through the Golgi, extension of its core oligosaccharides leads to the Golgi-modified P2 precursor (69 kDa). P2 is sorted away from secretory proteins at or beyond a late Golgi compartment and is subsequently delivered to the vacuole via a prevacuolar endosome-like compartment. Upon arrival in the vacuole, the N-terminal prosegment of P2 is cleaved by vacuolar proteases to yield the enzymatically active mature vacuolar form of CPY (61 kDa). In terms of processing, the four high mannose core N-glycans found in mature CPY are Man(11-15)GlcNAc(2) at Asn-124, Man(8-12)GlcNAc(2) at Asn-198, Man(9-14)GlcNAc(2) at Asn-279 and phosphorylated Man(12-17)GlcNAc(2) as well as Man(11-16)GlcNAc(2) at Asn-479.

Its subcellular location is the vacuole lumen. It catalyses the reaction Release of a C-terminal amino acid with broad specificity.. With respect to regulation, inhibited by ZPCK. In terms of biological role, vacuolar serine-type carboxypeptidase involved in degradation of small peptides. Digests preferentially peptides containing an aliphatic or hydrophobic residue in P1' position, as well as methionine, leucine or phenylalanine in P1 position of ester substrate. Also plays a role in breakdown of the autophagic body and the autophagosome-dependent protein synthesis. Plays a key role in phytochelatin (PC) synthesis from glutathione (GSH) by cleaving the Gly from GSH and form the PC-peptides of the structure (gamma-Glu-Cys)2-Gly. Also involved in resistance to xenobiotics via the degradation of glutathione-S-conjugates. The sequence is that of Carboxypeptidase Y from Saccharomyces cerevisiae (strain ATCC 204508 / S288c) (Baker's yeast).